The chain runs to 158 residues: Protein Smg homolog (158 aa).

Belongs to the Smg family.

This chain is Protein Smg homolog, found in Vibrio atlanticus (strain LGP32) (Vibrio splendidus (strain Mel32)).